Reading from the N-terminus, the 158-residue chain is NAD(P)H-quinone oxidoreductase subunit J, chloroplastic (158 aa).

Belongs to the complex I 30 kDa subunit family. As to quaternary structure, NDH is composed of at least 16 different subunits, 5 of which are encoded in the nucleus.

It localises to the plastid. Its subcellular location is the chloroplast thylakoid membrane. It catalyses the reaction a plastoquinone + NADH + (n+1) H(+)(in) = a plastoquinol + NAD(+) + n H(+)(out). It carries out the reaction a plastoquinone + NADPH + (n+1) H(+)(in) = a plastoquinol + NADP(+) + n H(+)(out). Functionally, NDH shuttles electrons from NAD(P)H:plastoquinone, via FMN and iron-sulfur (Fe-S) centers, to quinones in the photosynthetic chain and possibly in a chloroplast respiratory chain. The immediate electron acceptor for the enzyme in this species is believed to be plastoquinone. Couples the redox reaction to proton translocation, and thus conserves the redox energy in a proton gradient. The sequence is that of NAD(P)H-quinone oxidoreductase subunit J, chloroplastic from Vitis vinifera (Grape).